The chain runs to 195 residues: uncharacterized protein (195 aa).

2 disordered regions span residues 1–54 (MPKG…SNKI) and 173–195 (LAGA…KPIS). The segment covering 7 to 20 (KPNEKKEELEKFAK) has biased composition (basic and acidic residues). Over residues 45 to 54 (QNDSSSSNKI) the composition is skewed to polar residues. A coiled-coil region spans residues 48 to 97 (SSSSNKIVLSQAEKDLLRTELDKTEEEISTLKQVLSARQKHAAELKRKLG).

This sequence belongs to the TPD52 family.

This is an uncharacterized protein from Caenorhabditis elegans.